The chain runs to 346 residues: Glucose-6-phosphatase 3 (346 aa).

At 1 to 24 the chain is on the lumenal side; the sequence is MESTLGAGIVIAEALQNQLAWLEN. Residues 25 to 45 traverse the membrane as a helical segment; it reads VWLWITFLGDPKILFLFYFPA. The Cytoplasmic segment spans residues 46–54; it reads AYYASRRVG. The chain crosses the membrane as a helical span at residues 55-75; the sequence is IAVLWISLITEWLNLIFKWFL. Residues 76 to 114 are Lumenal-facing; the sequence is FGDRPFWWVHESGYYSQAPAQVHQFPSSCETGPGSPSGH. Residue arginine 79 participates in substrate binding. Residue histidine 114 is the Proton donor of the active site. The helical transmembrane segment at 115–135 threads the bilayer; sequence CMITGAALWPIMTALSSQVAT. The Cytoplasmic portion of the chain corresponds to 136-146; sequence RARSRWVRVMP. Residues 147-164 traverse the membrane as a helical segment; it reads SLAYCTFLLAVGLSRIFI. Substrate is bound at residue arginine 161. The Lumenal segment spans residues 165 to 169; it reads LAHFP. Histidine 167 functions as the Nucleophile in the catalytic mechanism. Residues 170-186 traverse the membrane as a helical segment; sequence HQVLAGLITGAVLGWLM. Residues 187 to 197 lie on the Cytoplasmic side of the membrane; the sequence is TPRVPMERELS. A helical membrane pass occupies residues 198 to 218; the sequence is FYGLTALALMLGTSLIYWTLF. At 219–254 the chain is on the lumenal side; that stretch reads TLGLDLSWSISLAFKWCERPEWIHVDSRPFASLSRD. The chain crosses the membrane as a helical span at residues 255 to 273; the sequence is SGAALGLGIALHSPCYAQV. The Cytoplasmic segment spans residues 274–283; the sequence is RRAQLGNGQK. A helical transmembrane segment spans residues 284–304; it reads IACLVLAMGLLGPLDWLGHPP. Over 305–307 the chain is Lumenal; that stretch reads QIS. A helical membrane pass occupies residues 308 to 328; sequence LFYIFNFLKYTLWPCLVLALV. The Cytoplasmic portion of the chain corresponds to 329-346; the sequence is PWAVHMFSAQEAPPIHSS.

This sequence belongs to the glucose-6-phosphatase family. As to expression, ubiquitously expressed. Highly expressed in skeletal muscle, at intermediate levels in heart, brain, placenta, kidney, colon, thymus, spleen and pancreas. Also detected in testis, prostate, ovary, liver, lung, small intestine and peripheral blood lymphocytes.

Its subcellular location is the endoplasmic reticulum membrane. It catalyses the reaction D-glucose 6-phosphate + H2O = D-glucose + phosphate. It participates in carbohydrate biosynthesis; gluconeogenesis. Inhibited by vanadate. Hydrolyzes glucose-6-phosphate to glucose in the endoplasmic reticulum. May form with the glucose-6-phosphate transporter (SLC37A4/G6PT) a ubiquitously expressed complex responsible for glucose production through glycogenolysis and gluconeogenesis. Probably required for normal neutrophil function. The sequence is that of Glucose-6-phosphatase 3 (G6PC3) from Homo sapiens (Human).